Reading from the N-terminus, the 47-residue chain is Putative glycosylation-dependent cell adhesion molecule 1 (47 aa).

An N-terminal signal peptide occupies residues 1 to 18; it reads MKFFMVLLPASLASTSLA.

This sequence belongs to the PP3/GlyCAM-1 family. As to expression, expressed in cells harvested from milk of lactating women. Not found in other tissues.

The protein is Putative glycosylation-dependent cell adhesion molecule 1 (GLYCAM1) of Homo sapiens (Human).